The chain runs to 307 residues: Mitochondrial brown fat uncoupling protein 1 (307 aa).

The Mitochondrial intermembrane segment spans residues 1 to 10 (MVSQTTSEVQ). Residues 11 to 32 (PTMGVKIFSAGVAACLADIITF) form a helical membrane-spanning segment. Solcar repeat units lie at residues 11–102 (PTMG…VQEY), 111–201 (PTLV…MKGA), and 210–295 (DDVP…LKKE). The Mitochondrial matrix segment spans residues 33 to 73 (PLDTAKVRLQIQGEGQTSSTIRYKGVLGTITTLAKTEGLPK). K56 is a fatty acid 16:0 binding site. The chain crosses the membrane as a helical span at residues 74–96 (LYSGLPAGIQRQISFASLRIGLY). The Mitochondrial intermembrane segment spans residues 97 to 116 (DTVQEYFSSGKETPPTLVNR). Residues 117-133 (ISAGLMTGGVAVFIGQP) traverse the membrane as a helical segment. The Mitochondrial matrix segment spans residues 134 to 178 (TEVVKVRLQAQSHLHGIKPRYTGTYNAYRIIATTESLSTLWKGTT). Residues 179-195 (PNLLRNVIINCTELVTY) form a helical membrane-spanning segment. The Mitochondrial intermembrane segment spans residues 196–212 (DLMKGALVNNQILADDV). The chain crosses the membrane as a helical span at residues 213-232 (PCHLLSALVAGFCTTFLASP). Residues 233–266 (ADVVKTRFINSLPGQYPSVPSCAMTMFTKEGPTA) lie on the Mitochondrial matrix side of the membrane. C254 is modified (cysteine sulfenic acid (-SOH)). Residues 267–289 (FFKGFVPSFLRLASWNVIMFVCF) form a helical membrane-spanning segment. Fatty acid 16:0 is bound at residue K269. At 290-307 (EQLKKELMKSRQTVDCTT) the chain is on the mitochondrial intermembrane side.

It belongs to the mitochondrial carrier (TC 2.A.29) family. In terms of assembly, most probably functions as a monomer. Binds one purine nucleotide per monomer. However, has also been suggested to function as a homodimer or a homotetramer. Tightly associates with cardiolipin in the mitochondrion inner membrane; may stabilize and regulate its activity. Post-translationally, may undergo sulfenylation upon cold exposure. May increase the sensitivity of UCP1 thermogenic function to the activation by noradrenaline probably through structural effects. May undergo ubiquitin-mediated proteasomal degradation. Brown adipose tissue.

It is found in the mitochondrion inner membrane. It carries out the reaction H(+)(in) = H(+)(out). Its activity is regulated as follows. Has no constitutive proton transporter activity and has to be activated by long-chain fatty acids/LCFAs. Inhibited by purine nucleotides. Both purine nucleotides and LCFAs bind the cytosolic side of the transporter and directly compete to activate or inhibit it. Activated by noradrenaline and reactive oxygen species. Despite lacking canonical translational encoding for selenocysteine, a small pool of the protein has been observed to selectively incorporate selenocysteine at 'Cys-254'. Selenocysteine-modified protein is highly sensitive to redox modification and may constitute a pool of protein highly sensitive to activation by elevated levels of reactive oxygen species (ROS). Mitochondrial protein responsible for thermogenic respiration, a specialized capacity of brown adipose tissue and beige fat that participates in non-shivering adaptive thermogenesis to temperature and diet variations and more generally to the regulation of energy balance. Functions as a long-chain fatty acid/LCFA and proton symporter, simultaneously transporting one LCFA and one proton through the inner mitochondrial membrane. However, LCFAs remaining associated with the transporter via their hydrophobic tails, it results in an apparent transport of protons activated by LCFAs. Thereby, dissipates the mitochondrial proton gradient and converts the energy of substrate oxydation into heat instead of ATP. Regulates the production of reactive oxygen species/ROS by mitochondria. This is Mitochondrial brown fat uncoupling protein 1 from Phodopus sungorus (Striped hairy-footed hamster).